A 103-amino-acid polypeptide reads, in one-letter code: Large ribosomal subunit protein bL21 (103 aa).

It belongs to the bacterial ribosomal protein bL21 family. In terms of assembly, part of the 50S ribosomal subunit. Contacts protein L20.

This protein binds to 23S rRNA in the presence of protein L20. The chain is Large ribosomal subunit protein bL21 from Paraburkholderia phytofirmans (strain DSM 17436 / LMG 22146 / PsJN) (Burkholderia phytofirmans).